A 171-amino-acid chain; its full sequence is T-cell surface glycoprotein CD3 delta chain (171 aa).

The signal sequence occupies residues 1–21 (MEHSTFLSGLVLATLLSQVSP). Residues 22–105 (FKIPIEELED…CVELDPATVA (84 aa)) are Extracellular-facing. Cysteines 37 and 73 form a disulfide. Residues N38 and N74 are each glycosylated (N-linked (GlcNAc...) asparagine). A helical membrane pass occupies residues 106–126 (GIIVTDVIATLLLALGVFCFA). The Cytoplasmic portion of the chain corresponds to 127-171 (GHETGRLSGAADTQALLRNDQVYQPLRDRDDAQYSHLGGNWARNK). Residues 138–166 (DTQALLRNDQVYQPLRDRDDAQYSHLGGN) form the ITAM domain. 2 positions are modified to phosphotyrosine: Y149 and Y160.

As to quaternary structure, the TCR-CD3 complex is composed of a CD3D/CD3E and a CD3G/CD3E heterodimers that preferentially associate with TCRalpha and TCRbeta, respectively, to form TCRalpha/CD3E/CD3G and TCRbeta/CD3G/CD3E trimers. In turn, the hexamer interacts with CD3Z homodimer to form the TCR-CD3 complex. Alternatively, TCRalpha and TCRbeta can be replaced by TCRgamma and TCRdelta. Interacts with coreceptors CD4 and CD8. In terms of processing, phosphorylated on Tyr residues after T-cell receptor triggering by LCK in association with CD4/CD8. In terms of tissue distribution, CD3D is mostly present on T-lymphocytes with its TCR-CD3 partners. Present also in fetal NK-cells.

Its subcellular location is the cell membrane. Part of the TCR-CD3 complex present on T-lymphocyte cell surface that plays an essential role in adaptive immune response. When antigen presenting cells (APCs) activate T-cell receptor (TCR), TCR-mediated signals are transmitted across the cell membrane by the CD3 chains CD3D, CD3E, CD3G and CD3Z. All CD3 chains contain immunoreceptor tyrosine-based activation motifs (ITAMs) in their cytoplasmic domain. Upon TCR engagement, these motifs become phosphorylated by Src family protein tyrosine kinases LCK and FYN, resulting in the activation of downstream signaling pathways. In addition of this role of signal transduction in T-cell activation, CD3D plays an essential role in thymocyte differentiation. Indeed, participates in correct intracellular TCR-CD3 complex assembly and surface expression. In absence of a functional TCR-CD3 complex, thymocytes are unable to differentiate properly. Interacts with CD4 and CD8 and thus serves to establish a functional link between the TCR and coreceptors CD4 and CD8, which is needed for activation and positive selection of CD4 or CD8 T-cells. In Homo sapiens (Human), this protein is T-cell surface glycoprotein CD3 delta chain (CD3D).